The following is an 87-amino-acid chain: Probable acyl carrier protein PigG (87 aa).

Positions 1 to 78 (MLESKLINHI…SMVALVQRLK (78 aa)) constitute a Carrier domain. At serine 36 the chain carries O-(pantetheine 4'-phosphoryl)serine.

Its pathway is antibiotic biosynthesis; prodigiosin biosynthesis. Involved in the biosynthesis of 4-methoxy-2,2'-bipyrrole-5-carbaldehyde (MBC), one of the terminal products involved in the biosynthesis of the red antibiotic prodigiosin (Pig). Carrier of the L-prolyl group transferred from L-prolyl-AMP by PigI. This is Probable acyl carrier protein PigG from Serratia sp. (strain ATCC 39006) (Prodigiosinella confusarubida).